A 517-amino-acid chain; its full sequence is Crotonobetaine/carnitine--CoA ligase (517 aa).

This sequence belongs to the ATP-dependent AMP-binding enzyme family.

It catalyses the reaction 4-(trimethylamino)butanoate + ATP + CoA = 4-(trimethylamino)butanoyl-CoA + AMP + diphosphate. The enzyme catalyses crotonobetaine + ATP + CoA = crotonobetainyl-CoA + AMP + diphosphate. The catalysed reaction is (R)-carnitine + ATP + CoA = (R)-carnitinyl-CoA + AMP + diphosphate. It functions in the pathway amine and polyamine metabolism; carnitine metabolism. Its function is as follows. Catalyzes the transfer of CoA to carnitine, generating the initial carnitinyl-CoA needed for the CaiB reaction cycle. Also has activity toward crotonobetaine and gamma-butyrobetaine. The polypeptide is Crotonobetaine/carnitine--CoA ligase (Escherichia coli O7:K1 (strain IAI39 / ExPEC)).